The sequence spans 546 residues: Protein phosphatase 1G (546 aa).

The N-myristoyl glycine moiety is linked to residue G2. An Omega-N-methylarginine modification is found at R22. The PPM-type phosphatase domain occupies 26 to 505 (PYGFSAMQGW…DNMTCIIICF (480 aa)). Mn(2+)-binding residues include D60 and G61. Disordered regions lie at residues 116–139 (QIAG…DVDN) and 161–328 (GQNC…SDSG). T122 is subject to Phosphothreonine. Acidic residues predominate over residues 123–139 (EDEDEKEKVADEDDVDN). S183 is subject to Phosphoserine. Acidic residues predominate over residues 259–312 (DSEDESDEAEEEEEDSEECSEEEDGYSSEEAENEEDEDDTEEAEEDDEEEEEEM). The residue at position 383 (K383) is an N6-acetyllysine. D441 and D496 together coordinate Mn(2+). A disordered region spans residues 512–546 (ELQPESGKRKLEEVLSTEGAEENGNSDKKKKAKRD). S527 bears the Phosphoserine mark.

It belongs to the PP2C family. In terms of assembly, interacts with NOL3; may dephosphorylate NOL3. Requires Mg(2+) as cofactor. Mn(2+) is required as a cofactor. Widely expressed. Most abundant in testis, skeletal muscle, and heart.

It localises to the cytoplasm. It is found in the membrane. It carries out the reaction O-phospho-L-seryl-[protein] + H2O = L-seryl-[protein] + phosphate. It catalyses the reaction O-phospho-L-threonyl-[protein] + H2O = L-threonyl-[protein] + phosphate. The protein is Protein phosphatase 1G (PPM1G) of Homo sapiens (Human).